Reading from the N-terminus, the 788-residue chain is Spastin (788 aa).

Residues 1-105 (MVRTKNQSSS…PRSAGGPSSV (105 aa)) are disordered. At 1–116 (MVRTKNQSSS…KQNLYVVSFP (116 aa)) the chain is on the cytoplasmic side. The required for localization to punctate cytoplasmic foci stretch occupies residues 1–227 (MVRTKNQSSS…NRSGSGYSPG (227 aa)). 2 stretches are compositionally biased toward low complexity: residues 8 to 48 (SSSS…SSHR) and 57 to 75 (ATNVSSSSNRRTTPGSSPD). Residues 117-137 (IIFLFNVLRSLIYQLFCIFRY) constitute an intramembrane region (helical). Topologically, residues 138 to 788 (LYGASTKVIY…WSSDYGDITI (651 aa)) are cytoplasmic. Residues 227-788 (GPGDPLLAKQ…WSSDYGDITI (562 aa)) form a sufficient for interaction with microtubules and microtubule severing region. The MIT domain occupies 240–315 (HRRAFEYISK…SMARDRLHFL (76 aa)). Positions 331-353 (EKQKANESREQQQKPQKAREAAD) are enriched in basic and acidic residues. Residues 331-484 (EKQKANESRE…SGSGSGASTP (154 aa)) are disordered. Over residues 387-400 (ATATTPTSSSSLAS) the composition is skewed to low complexity. Composition is skewed to polar residues over residues 419-433 (NKSQTLPRNLGSKTS) and 453-469 (QFSSGRNTPPQRSRTPI). The required for interaction with microtubules stretch occupies residues 471–485 (NNGASGSGSGASTPV). 553 to 560 (GPPGNGKT) contributes to the ATP binding site.

This sequence belongs to the AAA ATPase family. Spastin subfamily. As to quaternary structure, homohexamer. The homohexamer is stabilized by ATP-binding. The homohexamer may adopt a ring conformation through which microtubules pass prior to being severed. Interacts with microtubules. Interacts with atl; may be involved in microtubule dynamics.

It is found in the membrane. The protein resides in the cytoplasm. The protein localises to the cytoskeleton. Its subcellular location is the microtubule organizing center. It localises to the centrosome. It is found in the chromosome. The protein resides in the lipid droplet. It carries out the reaction n ATP + n H2O + a microtubule = n ADP + n phosphate + (n+1) alpha/beta tubulin heterodimers.. Its function is as follows. ATP-dependent microtubule severing protein. Stimulates microtubule minus-end depolymerization and poleward microtubule flux in the mitotic spindle. Regulates microtubule stability in the neuromuscular junction synapse. Involved in lipid metabolism by regulating the size and distribution of lipid droplets. Involved in axon regeneration by regulating microtubule severing. The sequence is that of Spastin from Drosophila persimilis (Fruit fly).